A 203-amino-acid polypeptide reads, in one-letter code: MKSTQQLGQEAREFEFNPNIPLHLYLKTCVTLLNNASECFQRGDKSLSYFYYFRYVDLCTNKLPNHPTIRSTSTGLDNDSKLYVQEYKQLLRLEVPHILKIMEELKTELDAMYERHKVSLANNIASPISYKHNNRMDALLHDYYTERGCTGHSMQHKTSLHKNENFNERINLMKDSFMGRAPNGSQEVRNVSNTFYPDLPTLS.

It belongs to the RFU1 family.

The protein resides in the endosome. In terms of biological role, inhibitor of the DOA4 deubiquitinase involved in the regulation of protein degradation by the proteasome and maintenance of a normal level of free ubiquitin. This is Regulator of free ubiquitin chains 1 (RFU1) from Candida glabrata (strain ATCC 2001 / BCRC 20586 / JCM 3761 / NBRC 0622 / NRRL Y-65 / CBS 138) (Yeast).